Consider the following 150-residue polypeptide: Small ribosomal subunit protein uS13 (150 aa).

Belongs to the universal ribosomal protein uS13 family. In terms of assembly, part of the 30S ribosomal subunit. Forms a loose heterodimer with protein S19. Forms two bridges to the 50S subunit in the 70S ribosome.

Its function is as follows. Located at the top of the head of the 30S subunit, it contacts several helices of the 16S rRNA. In the 70S ribosome it contacts the 23S rRNA (bridge B1a) and protein L5 of the 50S subunit (bridge B1b), connecting the 2 subunits; these bridges are implicated in subunit movement. This Aeropyrum pernix (strain ATCC 700893 / DSM 11879 / JCM 9820 / NBRC 100138 / K1) protein is Small ribosomal subunit protein uS13.